We begin with the raw amino-acid sequence, 201 residues long: MFEQNDDRDRGQVGIGTLIVFIAMVLVAAIAAGVLINTAGMLQTQAEATGEESTDQVSDRLDIVSVSGDVDDPDDPTQINNISMVTATAPGSDPVDLNQTTAQFIGEGGEEMFNLSHEGVFINSIQGVSDEPDNNVLTESSDRAEVVFELDGAPGSYDIGYEALDESERLTVILTTDAGASTEQEIRVPSTFIEDEESVRL.

The propeptide occupies 1-11; the sequence is MFEQNDDRDRG.

Belongs to the archaeal flagellin family.

The protein resides in the archaeal flagellum. Flagellin is the subunit protein which polymerizes to form the filaments of archaeal flagella. In Natrialba magadii (strain ATCC 43099 / DSM 3394 / CCM 3739 / CIP 104546 / IAM 13178 / JCM 8861 / NBRC 102185 / NCIMB 2190 / MS3) (Natronobacterium magadii), this protein is Flagellin B1 (flaB1).